The sequence spans 229 residues: MSQFPALEDFDDGLVTAPVDDSKNNTDFLEREKLALGEDAGQFETPEDKDALLNFENDSEAEQTRFEQNFPPIDAEMQASGTFSAPKAPYMGQAEVHPPEDESGDPEPVRKWKEDQMKRIQERDESSKKLRESNIEKARKAIDDFYENFNDKRDKVIAKSRKEQEKLLEENESKSTGTTSWERILKLIDLSDKPEAHGRSTERFRELLISLAKDSNAPGAAGTTVSSSS.

Disordered regions lie at residues 1–24 and 76–132; these read MSQF…DSKN and EMQA…KLRE. Residues 107–132 show a composition bias toward basic and acidic residues; sequence EPVRKWKEDQMKRIQERDESSKKLRE. Serine 229 is modified (phosphoserine).

This sequence belongs to the clathrin light chain family. Clathrin coats are formed from molecules containing 3 heavy chains and 3 light chains.

Its subcellular location is the cytoplasmic vesicle membrane. It is found in the membrane. It localises to the coated pit. Its function is as follows. Clathrin is the major protein of the polyhedral coat of coated pits and vesicles. This Schizosaccharomyces pombe (strain 972 / ATCC 24843) (Fission yeast) protein is Clathrin light chain (clc1).